We begin with the raw amino-acid sequence, 273 residues long: Lactose transport system permease protein LacG (273 aa).

Transmembrane regions (helical) follow at residues 15-35, 77-97, 110-130, 134-154, 182-204, and 240-260; these read YSVL…MVIG, IALV…YGFE, VILL…FMLM, GLLN…FIIF, FFYI…VFML, and GTVM…FFAM. An ABC transmembrane type-1 domain is found at 71-260; it reads FWNSVKIALV…LPTLLVFFAM (190 aa).

This sequence belongs to the binding-protein-dependent transport system permease family. MalFG subfamily.

Its subcellular location is the cell inner membrane. Part of the binding-protein-dependent transport system for lactose. Probably responsible for the translocation of the substrate across the membrane. The protein is Lactose transport system permease protein LacG (lacG) of Rhizobium radiobacter (Agrobacterium tumefaciens).